We begin with the raw amino-acid sequence, 203 residues long: Protein-L-isoaspartate O-methyltransferase (203 aa).

The active site involves Ser50.

This sequence belongs to the methyltransferase superfamily. L-isoaspartyl/D-aspartyl protein methyltransferase family.

The protein resides in the cytoplasm. It catalyses the reaction [protein]-L-isoaspartate + S-adenosyl-L-methionine = [protein]-L-isoaspartate alpha-methyl ester + S-adenosyl-L-homocysteine. Catalyzes the methyl esterification of L-isoaspartyl residues in peptides and proteins that result from spontaneous decomposition of normal L-aspartyl and L-asparaginyl residues. It plays a role in the repair and/or degradation of damaged proteins. This chain is Protein-L-isoaspartate O-methyltransferase, found in Methanococcoides burtonii (strain DSM 6242 / NBRC 107633 / OCM 468 / ACE-M).